Here is a 206-residue protein sequence, read N- to C-terminus: Sperm acrosome developmental regulator (206 aa).

A disordered region spans residues 180 to 206 (RRHHVRCHAAPRPNPAQSLKLDAQSPL).

As to expression, expressed in sperm (at protein level).

It is found in the cytoplasmic vesicle. Its subcellular location is the secretory vesicle. It localises to the acrosome. In terms of biological role, may play a role in acrosome formation and nucleus shaping during spermiogenesis. This Homo sapiens (Human) protein is Sperm acrosome developmental regulator.